We begin with the raw amino-acid sequence, 347 residues long: Holliday junction branch migration complex subunit RuvB (347 aa).

The tract at residues 1–183 (MSEERFVSGH…FGVVLQLQFY (183 aa)) is large ATPase domain (RuvB-L). Residues Leu-22, Arg-23, Gly-64, Lys-67, Thr-68, Thr-69, 130–132 (EDF), Arg-173, Tyr-183, and Arg-220 each bind ATP. Thr-68 contributes to the Mg(2+) binding site. A small ATPAse domain (RuvB-S) region spans residues 184 to 254 (SEEELTRILM…VADAGLRMMG (71 aa)). The interval 257 to 347 (AMGLDTVDHK…PEGPVQPRLF (91 aa)) is head domain (RuvB-H). DNA contacts are provided by Arg-312 and Arg-317.

Belongs to the RuvB family. In terms of assembly, homohexamer. Forms an RuvA(8)-RuvB(12)-Holliday junction (HJ) complex. HJ DNA is sandwiched between 2 RuvA tetramers; dsDNA enters through RuvA and exits via RuvB. An RuvB hexamer assembles on each DNA strand where it exits the tetramer. Each RuvB hexamer is contacted by two RuvA subunits (via domain III) on 2 adjacent RuvB subunits; this complex drives branch migration. In the full resolvosome a probable DNA-RuvA(4)-RuvB(12)-RuvC(2) complex forms which resolves the HJ.

The protein resides in the cytoplasm. The enzyme catalyses ATP + H2O = ADP + phosphate + H(+). The RuvA-RuvB-RuvC complex processes Holliday junction (HJ) DNA during genetic recombination and DNA repair, while the RuvA-RuvB complex plays an important role in the rescue of blocked DNA replication forks via replication fork reversal (RFR). RuvA specifically binds to HJ cruciform DNA, conferring on it an open structure. The RuvB hexamer acts as an ATP-dependent pump, pulling dsDNA into and through the RuvAB complex. RuvB forms 2 homohexamers on either side of HJ DNA bound by 1 or 2 RuvA tetramers; 4 subunits per hexamer contact DNA at a time. Coordinated motions by a converter formed by DNA-disengaged RuvB subunits stimulates ATP hydrolysis and nucleotide exchange. Immobilization of the converter enables RuvB to convert the ATP-contained energy into a lever motion, pulling 2 nucleotides of DNA out of the RuvA tetramer per ATP hydrolyzed, thus driving DNA branch migration. The RuvB motors rotate together with the DNA substrate, which together with the progressing nucleotide cycle form the mechanistic basis for DNA recombination by continuous HJ branch migration. Branch migration allows RuvC to scan DNA until it finds its consensus sequence, where it cleaves and resolves cruciform DNA. The protein is Holliday junction branch migration complex subunit RuvB of Symbiobacterium thermophilum (strain DSM 24528 / JCM 14929 / IAM 14863 / T).